Consider the following 143-residue polypeptide: MLMGQYEHTIDAKGRVIIPAKFRGELGDRFVLTKGLDNCLFVYSLEEWKNIEAKLKTLPLTKKDARAFTRFFLAGAVECEIDKQGRILIPANLREHAKIEKDVIFIGVSTRVEIWSKEVWEEYSNNTDVSFEEIAEHLDELNI.

SpoVT-AbrB domains follow at residues 5 to 47 (QYEH…SLEE) and 76 to 119 (AVEC…SKEV).

It belongs to the MraZ family. Forms oligomers.

It is found in the cytoplasm. Its subcellular location is the nucleoid. The chain is Transcriptional regulator MraZ from Thermoanaerobacter pseudethanolicus (strain ATCC 33223 / 39E) (Clostridium thermohydrosulfuricum).